The chain runs to 85 residues: Large ribosomal subunit protein bL31B (85 aa).

This sequence belongs to the bacterial ribosomal protein bL31 family. Type B subfamily. Part of the 50S ribosomal subunit.

This chain is Large ribosomal subunit protein bL31B, found in Kocuria rhizophila (strain ATCC 9341 / DSM 348 / NBRC 103217 / DC2201).